Consider the following 282-residue polypeptide: Ribosome-inactivating protein bryodin II (282 aa).

Positions 1 to 21 are cleaved as a signal peptide; sequence MRSIGFYSVLALYVGAHVTED. N-linked (GlcNAc...) asparagine glycosylation occurs at N25. E183 is an active-site residue.

The protein belongs to the ribosome-inactivating protein family. Type 1 RIP subfamily.

It catalyses the reaction Endohydrolysis of the N-glycosidic bond at one specific adenosine on the 28S rRNA.. Its function is as follows. Ribosome-inactivating protein of type 1, inhibits protein synthesis in animal cells. The chain is Ribosome-inactivating protein bryodin II from Bryonia dioica (Red bryony).